We begin with the raw amino-acid sequence, 212 residues long: Mediator of RNA polymerase II transcription subunit 20 (212 aa).

The protein belongs to the Mediator complex subunit 20 family. In terms of assembly, component of the Mediator complex, which is composed of MED1, MED4, MED6, MED7, MED8, MED9, MED10, MED11, MED12, MED13, MED13L, MED14, MED15, MED16, MED17, MED18, MED19, MED20, MED21, MED22, MED23, MED24, MED25, MED26, MED27, MED29, MED30, MED31, CCNC, CDK8 and CDC2L6/CDK11. The MED12, MED13, CCNC and CDK8 subunits form a distinct module termed the CDK8 module. Mediator containing the CDK8 module is less active than Mediator lacking this module in supporting transcriptional activation. Individual preparations of the Mediator complex lacking one or more distinct subunits have been variously termed ARC, CRSP, DRIP, PC2, SMCC and TRAP. Interacts with PPARG.

It is found in the nucleus. Component of the Mediator complex, a coactivator involved in the regulated transcription of nearly all RNA polymerase II-dependent genes. Mediator functions as a bridge to convey information from gene-specific regulatory proteins to the basal RNA polymerase II transcription machinery. Mediator is recruited to promoters by direct interactions with regulatory proteins and serves as a scaffold for the assembly of a functional preinitiation complex with RNA polymerase II and the general transcription factors. The protein is Mediator of RNA polymerase II transcription subunit 20 (MED20) of Macaca fascicularis (Crab-eating macaque).